Reading from the N-terminus, the 272-residue chain is MTTIVKRALVAAGMVLAIGGAAQANEGGVSLHKQDWSWKGIFGRYDQPQLQRGFQVFHEVCSTCHGMKRVAYRNLSALGFSEDGIKELAAEKEFPAGPDDNGDMFTRPGTPADHIPSPFANDKAAAAANGGAAPPDLSLLAKARPGGPNYIYSLLEGYASDSPGEPAEWWVKQQQEKGLEVAFNEAKYFNDYFPGHAISMPPPLMDDLITYEDGTAATKDQMAQDVVAYLNWAAEPELDARKSLGLKVLLFLGVLTAMLLALKLAIWRDVKH.

An N-terminal signal peptide occupies residues 1–24; the sequence is MTTIVKRALVAAGMVLAIGGAAQA. 4 residues coordinate heme c: Cys61, Cys64, His65, and Met200. Residues 244–261 traverse the membrane as a helical segment; it reads LGLKVLLFLGVLTAMLLA.

In terms of assembly, the main subunits of complex b-c1 are: cytochrome b, cytochrome c1 and the Rieske protein. Binds 1 heme c group covalently per subunit.

The protein localises to the cell membrane. Its function is as follows. Component of the ubiquinol-cytochrome c reductase complex (complex III or cytochrome b-c1 complex), which is a respiratory chain that generates an electrochemical potential coupled to ATP synthesis. This is Cytochrome c1 (petC) from Rhodospirillum rubrum.